The following is a 234-amino-acid chain: Sugar fermentation stimulation protein homolog (234 aa).

This sequence belongs to the SfsA family.

In Photobacterium profundum (strain SS9), this protein is Sugar fermentation stimulation protein homolog.